The sequence spans 258 residues: RBPJ-interacting and tubulin-associated protein 1 (258 aa).

Disordered regions lie at residues 28 to 86 (FGSP…PRKK), 132 to 182 (TPPA…APRS), and 195 to 258 (AVPS…PPWK). Polar residues predominate over residues 71–81 (SPSSRGSTPNL). A Nuclear localization signal motif is present at residues 81-97 (LTPRKKNKYRLIGHTPS). Residues 117–145 (RTAVEDAAKLRTLFWTPPATPRGSHSPRP) are interaction with RBPJ/RBPSUH. The tract at residues 145–258 (PRETPLRAIH…CPQKPKPPWK (114 aa)) is interaction with tubulin. Polar residues-rich tracts occupy residues 201–212 (HPASTAPQTNGP) and 236–245 (GSVSGPTTPQ).

It belongs to the RITA family. As to quaternary structure, interacts with RBPJ/RBPSUH.

It is found in the cytoplasm. The protein localises to the nucleus. It localises to the cytoskeleton. Its subcellular location is the microtubule organizing center. The protein resides in the centrosome. In terms of biological role, tubulin-binding protein that acts as a negative regulator of Notch signaling pathway. Shuttles between the cytoplasm and the nucleus and mediates the nuclear export of RBPJ/RBPSUH, thereby preventing the interaction between RBPJ/RBPSUH and NICD product of Notch proteins (Notch intracellular domain), leading to down-regulate Notch-mediated transcription. May play a role in neurogenesis. The sequence is that of RBPJ-interacting and tubulin-associated protein 1 (Rita1) from Rattus norvegicus (Rat).